The sequence spans 428 residues: Enolase (428 aa).

Glutamine 162 is a (2R)-2-phosphoglycerate binding site. The active-site Proton donor is glutamate 204. The Mg(2+) site is built by aspartate 241, glutamate 283, and aspartate 310. Residues lysine 335, arginine 364, serine 365, and lysine 386 each contribute to the (2R)-2-phosphoglycerate site. The active-site Proton acceptor is the lysine 335.

This sequence belongs to the enolase family. It depends on Mg(2+) as a cofactor.

Its subcellular location is the cytoplasm. The protein resides in the secreted. The protein localises to the cell surface. The enzyme catalyses (2R)-2-phosphoglycerate = phosphoenolpyruvate + H2O. It functions in the pathway carbohydrate degradation; glycolysis; pyruvate from D-glyceraldehyde 3-phosphate: step 4/5. Its function is as follows. Catalyzes the reversible conversion of 2-phosphoglycerate (2-PG) into phosphoenolpyruvate (PEP). It is essential for the degradation of carbohydrates via glycolysis. The chain is Enolase from Rhodococcus opacus (strain B4).